The following is a 152-amino-acid chain: MRPEAAGVREARGRLCHCPGDDPGRLPLPRGPESSIPAPWRPWMSPPPGDAELTRTERPCESWGDQHTSGSKGAFGFQHPVRLYLPVSKRQEYLQSSGEKVLASFPVQATIHFYNDDSESGSEEEQEEEAQPNHLQCLEAEVRDSAQEERAE.

Residues 1–24 (MRPEAAGVREARGRLCHCPGDDPG) are compositionally biased toward basic and acidic residues. Disordered regions lie at residues 1–76 (MRPE…GAFG) and 113–152 (FYND…ERAE). The short motif at 40-43 (WRPW) is the WRPW motif element. The segment at 79 to 114 (HPVRLYLPVSKRQEYLQSSGEKVLASFPVQATIHFY) is ripply homology domain. Residues 116–130 (DDSESGSEEEQEEEA) are compositionally biased toward acidic residues. Basic and acidic residues predominate over residues 140-152 (AEVRDSAQEERAE).

This sequence belongs to the ripply family. Interacts with TBX1.

Its subcellular location is the nucleus. Its function is as follows. Acts as a transcriptional corepressor. Negative regulator of the transcriptional activity of TBX1. Plays a role in the development of the pharyngeal apparatus and derivatives. The protein is Protein ripply3 (Ripply3) of Mus musculus (Mouse).